The primary structure comprises 112 residues: HTH-type transcriptional regulator YodB (112 aa).

One can recognise an HTH hxlR-type domain in the interval 6-105 (CPKMESAFSL…WADQFCEPGD (100 aa)).

Negatively regulates yodC and azoR1 which may contribute to the degradation of aromatic compounds. Probably positively regulates the catechol-specific transcription of mhqNOP, mhqED, and mhqA. The sequence is that of HTH-type transcriptional regulator YodB (yodB) from Bacillus subtilis (strain 168).